Reading from the N-terminus, the 186-residue chain is ADP compounds hydrolase NudE (186 aa).

Glu-40 is a binding site for substrate. In terms of domain architecture, Nudix hydrolase spans 45–172; it reads TNREAVMIVP…DFNEARNVSA (128 aa). The Nudix box motif lies at 80 to 101; it reads GLIDPGESVYEAANRELKEEVG. A divalent metal cation-binding residues include Glu-95 and Glu-99. Ser-118 is a substrate binding site.

The protein belongs to the Nudix hydrolase family. As to quaternary structure, homodimer. Mg(2+) serves as cofactor.

The enzyme catalyses ADP-D-ribose + H2O = D-ribose 5-phosphate + AMP + 2 H(+). Functionally, active on adenosine(5')triphospho(5')adenosine (Ap3A), ADP-ribose, NADH, adenosine(5')diphospho(5')adenosine (Ap2A). The sequence is that of ADP compounds hydrolase NudE (nudE) from Escherichia coli (strain K12).